Here is a 105-residue protein sequence, read N- to C-terminus: Thioredoxin-like protein slr0233 (105 aa).

Residues Met1–Gln102 enclose the Thioredoxin domain. Cys30 and Cys33 are oxidised to a cystine.

Belongs to the thioredoxin family.

The protein is Thioredoxin-like protein slr0233 of Synechocystis sp. (strain ATCC 27184 / PCC 6803 / Kazusa).